Consider the following 150-residue polypeptide: Cytochrome c oxidase subunit 5A, mitochondrial (150 aa).

Residues 1–41 constitute a mitochondrion transit peptide; it reads MLGTALRRCAVAAASRAGSRGLLHPTPVPGPTAAIQSIRCY. The short motif at 2-17 is the SIFI-degron element; sequence LGTALRRCAVAAASRA. An N6-acetyllysine mark is found at K87 and K113. The residue at position 141 (T141) is a Phosphothreonine.

It belongs to the cytochrome c oxidase subunit 5A family. Component of the cytochrome c oxidase (complex IV, CIV), a multisubunit enzyme composed of 14 subunits. The complex is composed of a catalytic core of 3 subunits MT-CO1, MT-CO2 and MT-CO3, encoded in the mitochondrial DNA, and 11 supernumerary subunits COX4I, COX5A, COX5B, COX6A, COX6B, COX6C, COX7A, COX7B, COX7C, COX8 and NDUFA4, which are encoded in the nuclear genome. The complex exists as a monomer or a dimer and forms supercomplexes (SCs) in the inner mitochondrial membrane with NADH-ubiquinone oxidoreductase (complex I, CI) and ubiquinol-cytochrome c oxidoreductase (cytochrome b-c1 complex, complex III, CIII), resulting in different assemblies (supercomplex SCI(1)III(2)IV(1) and megacomplex MCI(2)III(2)IV(2)). Interacts with AFG1L. Interacts with RAB5IF. In terms of processing, in response to mitochondrial stress, the precursor protein is ubiquitinated by the SIFI complex in the cytoplasm before mitochondrial import, leading to its degradation. Within the SIFI complex, UBR4 initiates ubiquitin chain that are further elongated or branched by KCMF1.

It localises to the mitochondrion inner membrane. The protein operates within energy metabolism; oxidative phosphorylation. In terms of biological role, component of the cytochrome c oxidase, the last enzyme in the mitochondrial electron transport chain which drives oxidative phosphorylation. The respiratory chain contains 3 multisubunit complexes succinate dehydrogenase (complex II, CII), ubiquinol-cytochrome c oxidoreductase (cytochrome b-c1 complex, complex III, CIII) and cytochrome c oxidase (complex IV, CIV), that cooperate to transfer electrons derived from NADH and succinate to molecular oxygen, creating an electrochemical gradient over the inner membrane that drives transmembrane transport and the ATP synthase. Cytochrome c oxidase is the component of the respiratory chain that catalyzes the reduction of oxygen to water. Electrons originating from reduced cytochrome c in the intermembrane space (IMS) are transferred via the dinuclear copper A center (CU(A)) of subunit 2 and heme A of subunit 1 to the active site in subunit 1, a binuclear center (BNC) formed by heme A3 and copper B (CU(B)). The BNC reduces molecular oxygen to 2 water molecules using 4 electrons from cytochrome c in the IMS and 4 protons from the mitochondrial matrix. This chain is Cytochrome c oxidase subunit 5A, mitochondrial (COX5A), found in Otolemur crassicaudatus (Brown greater galago).